Reading from the N-terminus, the 114-residue chain is Cytochrome c oxidase assembly protein cox16, mitochondrial (114 aa).

The chain crosses the membrane as a helical span at residues 29–49; that stretch reads PFLLFGLPFMSVIVAGSFILT.

It belongs to the COX16 family.

The protein resides in the mitochondrion inner membrane. Functionally, required for the assembly of the mitochondrial respiratory chain complex IV (CIV), also known as cytochrome c oxidase. May participate in merging the COX1 and COX2 assembly lines. The sequence is that of Cytochrome c oxidase assembly protein cox16, mitochondrial (cox-9) from Neurospora crassa (strain ATCC 24698 / 74-OR23-1A / CBS 708.71 / DSM 1257 / FGSC 987).